The sequence spans 214 residues: Imidazole glycerol phosphate synthase subunit HisH (214 aa).

The 213-residue stretch at 2–214 (RVALIDYGSG…LIANFLRWAP (213 aa)) folds into the Glutamine amidotransferase type-1 domain. Cys88 serves as the catalytic Nucleophile. Catalysis depends on residues His194 and Glu196.

In terms of assembly, heterodimer of HisH and HisF.

It localises to the cytoplasm. The catalysed reaction is 5-[(5-phospho-1-deoxy-D-ribulos-1-ylimino)methylamino]-1-(5-phospho-beta-D-ribosyl)imidazole-4-carboxamide + L-glutamine = D-erythro-1-(imidazol-4-yl)glycerol 3-phosphate + 5-amino-1-(5-phospho-beta-D-ribosyl)imidazole-4-carboxamide + L-glutamate + H(+). The enzyme catalyses L-glutamine + H2O = L-glutamate + NH4(+). The protein operates within amino-acid biosynthesis; L-histidine biosynthesis; L-histidine from 5-phospho-alpha-D-ribose 1-diphosphate: step 5/9. Its function is as follows. IGPS catalyzes the conversion of PRFAR and glutamine to IGP, AICAR and glutamate. The HisH subunit catalyzes the hydrolysis of glutamine to glutamate and ammonia as part of the synthesis of IGP and AICAR. The resulting ammonia molecule is channeled to the active site of HisF. In Rhodospirillum rubrum (strain ATCC 11170 / ATH 1.1.1 / DSM 467 / LMG 4362 / NCIMB 8255 / S1), this protein is Imidazole glycerol phosphate synthase subunit HisH.